The chain runs to 476 residues: Cytochrome c oxidase subunit 1 (476 aa).

The chain crosses the membrane as a helical span at residues 19-39 (LYYLWFSFLFGTYGFLLSVIL). Position 42 (Glu-42) interacts with Ca(2+). Transmembrane regions (helical) follow at residues 61–81 (MIFT…GLFG), 105–125 (ISLL…AAEF), 144–164 (LSPV…IASI), 194–214 (IIIT…GVLM), 240–260 (LFWF…FGVI), 278–298 (MILA…HHMY), 309–329 (FFTS…FNWL), and 345–365 (LLCL…VILG). His-66 is a binding site for Fe(II)-heme a. His-246 lines the Cu cation pocket. Residues 246 to 250 (HPEVY) constitute a cross-link (1'-histidyl-3'-tyrosine (His-Tyr)). Tyr-250 contributes to the O2 binding site. 2 residues coordinate Cu cation: His-295 and His-296. The Mg(2+) site is built by His-374 and Asp-375. 2 helical membrane passes run 379–399 (VIAH…FTCV) and 415–435 (TLIV…FLPM). Heme a3 is bound at residue His-382. His-384 is a Fe(II)-heme a binding site. Pro-448 provides a ligand contact to Ca(2+). A helical transmembrane segment spans residues 455-475 (NGWNMICSIGSTMTLFGLLIF).

Belongs to the heme-copper respiratory oxidase family. In terms of assembly, component of the cytochrome c oxidase (complex IV, CIV), a multisubunit enzyme composed of a catalytic core of 3 subunits and several supernumerary subunits. The complex exists as a monomer or a dimer and forms supercomplexes (SCs) in the inner mitochondrial membrane with ubiquinol-cytochrome c oxidoreductase (cytochrome b-c1 complex, complex III, CIII). The cofactor is heme. Cu cation serves as cofactor.

The protein localises to the mitochondrion inner membrane. It carries out the reaction 4 Fe(II)-[cytochrome c] + O2 + 8 H(+)(in) = 4 Fe(III)-[cytochrome c] + 2 H2O + 4 H(+)(out). Its pathway is energy metabolism; oxidative phosphorylation. In terms of biological role, component of the cytochrome c oxidase, the last enzyme in the mitochondrial electron transport chain which drives oxidative phosphorylation. The respiratory chain contains 3 multisubunit complexes succinate dehydrogenase (complex II, CII), ubiquinol-cytochrome c oxidoreductase (cytochrome b-c1 complex, complex III, CIII) and cytochrome c oxidase (complex IV, CIV), that cooperate to transfer electrons derived from NADH and succinate to molecular oxygen, creating an electrochemical gradient over the inner membrane that drives transmembrane transport and the ATP synthase. Cytochrome c oxidase is the component of the respiratory chain that catalyzes the reduction of oxygen to water. Electrons originating from reduced cytochrome c in the intermembrane space (IMS) are transferred via the dinuclear copper A center (CU(A)) of subunit 2 and heme A of subunit 1 to the active site in subunit 1, a binuclear center (BNC) formed by heme A3 and copper B (CU(B)). The BNC reduces molecular oxygen to 2 water molecules using 4 electrons from cytochrome c in the IMS and 4 protons from the mitochondrial matrix. The sequence is that of Cytochrome c oxidase subunit 1 (COI) from Plasmodium berghei.